Consider the following 409-residue polypeptide: Multidrug resistance protein MdtG (409 aa).

A run of 10 helical transmembrane segments spans residues 16 to 36 (LIVAWLGCFLTGAAFSLVMPF), 58 to 78 (IVFSITFLFSAIASPFWGGLA), 92 to 112 (LGMGIVMVLMGLAQNIWQFLI), 115 to 135 (ALLGLLGGFVPNANALIATQV), 146 to 166 (TLSTGGVSGALLGPMAGGLLA), 173 to 193 (PVFFITASVLILCFFVTLFCI), 224 to 244 (LFVTTLIIQVATGSIAPILTL), 256 to 276 (VAFISGMIASVPGVAALLLSA), 291 to 311 (ILITALIFSVLLLIPMSYVQT), and 379 to 399 (AVFLVTAGVVLFNAVYSWNSL).

Belongs to the major facilitator superfamily. DHA1 family. MdtG (TC 2.A.1.2.20) subfamily.

The protein localises to the cell inner membrane. Confers resistance to fosfomycin and deoxycholate. The polypeptide is Multidrug resistance protein MdtG (Escherichia coli O9:H4 (strain HS)).